Reading from the N-terminus, the 466-residue chain is Asparagine--tRNA ligase (466 aa).

It belongs to the class-II aminoacyl-tRNA synthetase family. In terms of assembly, homodimer.

It localises to the cytoplasm. It catalyses the reaction tRNA(Asn) + L-asparagine + ATP = L-asparaginyl-tRNA(Asn) + AMP + diphosphate + H(+). This Salmonella paratyphi A (strain ATCC 9150 / SARB42) protein is Asparagine--tRNA ligase.